Consider the following 276-residue polypeptide: Undecaprenyl-diphosphatase (276 aa).

Helical transmembrane passes span 1–21 (MSWL…FLPV), 39–59 (AGAS…LVYF), 84–104 (YWLG…GLLF), 115–135 (LWLV…AEYY), 188–208 (FGFL…LPDA), 222–242 (QLFV…AWFL), and 253–273 (FVGY…AGVV).

This sequence belongs to the UppP family.

It is found in the cell membrane. It catalyses the reaction di-trans,octa-cis-undecaprenyl diphosphate + H2O = di-trans,octa-cis-undecaprenyl phosphate + phosphate + H(+). Functionally, catalyzes the dephosphorylation of undecaprenyl diphosphate (UPP). Confers resistance to bacitracin. In Mycolicibacterium vanbaalenii (strain DSM 7251 / JCM 13017 / BCRC 16820 / KCTC 9966 / NRRL B-24157 / PYR-1) (Mycobacterium vanbaalenii), this protein is Undecaprenyl-diphosphatase.